The chain runs to 143 residues: Ribosome-binding factor A (143 aa).

Residues 116 to 128 show a composition bias toward basic and acidic residues; sequence SDDEAKQKQHGDQ. Residues 116-143 are disordered; that stretch reads SDDEAKQKQHGDQQDVSQSSDDKSEGED.

Belongs to the RbfA family. Monomer. Binds 30S ribosomal subunits, but not 50S ribosomal subunits or 70S ribosomes.

It localises to the cytoplasm. Its function is as follows. One of several proteins that assist in the late maturation steps of the functional core of the 30S ribosomal subunit. Associates with free 30S ribosomal subunits (but not with 30S subunits that are part of 70S ribosomes or polysomes). Required for efficient processing of 16S rRNA. May interact with the 5'-terminal helix region of 16S rRNA. This Shewanella sediminis (strain HAW-EB3) protein is Ribosome-binding factor A.